Reading from the N-terminus, the 551-residue chain is DNA ligase (551 aa).

Residue E246 participates in ATP binding. The N6-AMP-lysine intermediate role is filled by K248. ATP contacts are provided by R253, R268, E298, F337, R414, and K420.

Belongs to the ATP-dependent DNA ligase family. Mg(2+) serves as cofactor.

It carries out the reaction ATP + (deoxyribonucleotide)n-3'-hydroxyl + 5'-phospho-(deoxyribonucleotide)m = (deoxyribonucleotide)n+m + AMP + diphosphate.. Functionally, DNA ligase that seals nicks in double-stranded DNA during DNA replication, DNA recombination and DNA repair. This chain is DNA ligase, found in Methanobrevibacter smithii (strain ATCC 35061 / DSM 861 / OCM 144 / PS).